Here is a 201-residue protein sequence, read N- to C-terminus: Rho GDP-dissociation inhibitor 2 (201 aa).

A disordered region spans residues 1 to 38 (MTEKAPEPHVEEDDDDELDSKLNYKPPPQKSLKELQEM). Thr-2 is modified (N-acetylthreonine). Lys-21 carries the N6-acetyllysine modification. At Tyr-24 the chain carries Phosphotyrosine. Lys-25, Lys-40, Lys-47, Lys-102, and Lys-124 each carry N6-acetyllysine. Ser-145 is modified (phosphoserine). Residue Lys-175 is modified to N6-acetyllysine.

The protein belongs to the Rho GDI family. As to quaternary structure, interacts with RHOA. Interacts with RAC1. Interacts with RAC2. Interacts with CDC42. In terms of tissue distribution, detected in bone marrow, thymus and spleen.

Its subcellular location is the cytoplasm. The protein localises to the cytosol. In terms of biological role, regulates the GDP/GTP exchange reaction of the Rho proteins by inhibiting the dissociation of GDP from them, and the subsequent binding of GTP to them. Regulates reorganization of the actin cytoskeleton mediated by Rho family members. The sequence is that of Rho GDP-dissociation inhibitor 2 (ARHGDIB) from Homo sapiens (Human).